Consider the following 360-residue polypeptide: Malonyl CoA-acyl carrier protein transacylase, mitochondrial (360 aa).

A mitochondrion-targeting transit peptide spans 1–24 (MKLLTFPGQGTSISISILKAIIRN). Active-site residues include Ser105 and His235.

Belongs to the FabD family.

Its subcellular location is the mitochondrion. The catalysed reaction is holo-[ACP] + malonyl-CoA = malonyl-[ACP] + CoA. It functions in the pathway lipid metabolism; fatty acid biosynthesis. In terms of biological role, involved in biosynthesis of fatty acids in mitochondria. In Saccharomyces cerevisiae (strain ATCC 204508 / S288c) (Baker's yeast), this protein is Malonyl CoA-acyl carrier protein transacylase, mitochondrial (MCT1).